We begin with the raw amino-acid sequence, 233 residues long: Orotidine 5'-phosphate decarboxylase (233 aa).

Substrate-binding positions include aspartate 10, lysine 32, 60–69 (DLKLHDIPAT), threonine 115, arginine 176, glutamine 185, glycine 205, and arginine 206. Lysine 62 acts as the Proton donor in catalysis.

Belongs to the OMP decarboxylase family. Type 1 subfamily. In terms of assembly, homodimer.

It carries out the reaction orotidine 5'-phosphate + H(+) = UMP + CO2. It functions in the pathway pyrimidine metabolism; UMP biosynthesis via de novo pathway; UMP from orotate: step 2/2. Functionally, catalyzes the decarboxylation of orotidine 5'-monophosphate (OMP) to uridine 5'-monophosphate (UMP). The chain is Orotidine 5'-phosphate decarboxylase from Thermobifida fusca (strain YX).